A 213-amino-acid chain; its full sequence is Octanoyltransferase (213 aa).

The 176-residue stretch at 28-203 (GTSPETLLLL…RFPFLLDERL (176 aa)) folds into the BPL/LPL catalytic domain. Substrate-binding positions include 66–73 (RGGDVTFH), 133–135 (SIG), and 146–148 (GFA). Catalysis depends on Cys-164, which acts as the Acyl-thioester intermediate.

The protein belongs to the LipB family.

It is found in the cytoplasm. The enzyme catalyses octanoyl-[ACP] + L-lysyl-[protein] = N(6)-octanoyl-L-lysyl-[protein] + holo-[ACP] + H(+). It functions in the pathway protein modification; protein lipoylation via endogenous pathway; protein N(6)-(lipoyl)lysine from octanoyl-[acyl-carrier-protein]: step 1/2. Catalyzes the transfer of endogenously produced octanoic acid from octanoyl-acyl-carrier-protein onto the lipoyl domains of lipoate-dependent enzymes. Lipoyl-ACP can also act as a substrate although octanoyl-ACP is likely to be the physiological substrate. The sequence is that of Octanoyltransferase from Geobacter metallireducens (strain ATCC 53774 / DSM 7210 / GS-15).